The sequence spans 321 residues: Arabinan endo-1,5-alpha-L-arabinosidase A (321 aa).

The N-terminal stretch at 1 to 19 (MYSLLTALSVPLLAGLAHG) is a signal peptide. Aspartate 34 acts as the Proton acceptor in catalysis. N-linked (GlcNAc...) asparagine glycosylation occurs at asparagine 192. Glutamate 200 functions as the Proton donor in the catalytic mechanism.

Belongs to the glycosyl hydrolase 43 family.

It localises to the secreted. It catalyses the reaction Endohydrolysis of (1-&gt;5)-alpha-arabinofuranosidic linkages in (1-&gt;5)-arabinans.. It functions in the pathway glycan metabolism; L-arabinan degradation. Endo-1,5-alpha-L-arabinanase involved in degradation of pectin. Its preferred substrate is linear 1,5-alpha-L-arabinan. This chain is Arabinan endo-1,5-alpha-L-arabinosidase A (abnA), found in Aspergillus aculeatus.